The chain runs to 93 residues: Large ribosomal subunit protein bL27 (93 aa).

The propeptide occupies 1–8 (MIMDLQFF). Residues 8–29 (FSHHKGGGSTANGRNSAGRRLG) are disordered.

It belongs to the bacterial ribosomal protein bL27 family. Post-translationally, the N-terminus is cleaved by ribosomal processing cysteine protease Prp.

The sequence is that of Large ribosomal subunit protein bL27 from Limosilactobacillus fermentum (strain NBRC 3956 / LMG 18251) (Lactobacillus fermentum).